The chain runs to 433 residues: 28S rRNA (cytosine-C(5))-methyltransferase (433 aa).

Residues 235–241 (CAAPGMK), glutamate 259, aspartate 286, and aspartate 304 each bind S-adenosyl-L-methionine. The active-site Nucleophile is the cysteine 357.

Belongs to the class I-like SAM-binding methyltransferase superfamily. RsmB/NOP family.

The catalysed reaction is a cytidine in 28S rRNA + S-adenosyl-L-methionine = a 5-methylcytidine in 28S rRNA + S-adenosyl-L-homocysteine + H(+). Functionally, S-adenosyl-L-methionine-dependent methyltransferase that specifically methylates the C(5) position of a cytosine in 28S rRNA. The chain is 28S rRNA (cytosine-C(5))-methyltransferase from Drosophila melanogaster (Fruit fly).